The following is a 550-amino-acid chain: Leiomodin-2 (550 aa).

The tract at residues 1–47 (MSTFGYRRGLSKYESIDEDELLASLSPEELKELERELEDIEPDRNLP) is interaction with tropomyosin alpha. Interaction with actin regions lie at residues 1–165 (MSTF…TDNS), 166–500 (KPKT…KEIK), and 524–543 (VHEN…LRRV). 3 positions are modified to phosphoserine: Ser11, Ser15, and Ser24. Over residues 84 to 94 (ERLGECGKVAE) the composition is skewed to basic and acidic residues. 2 disordered regions span residues 84 to 202 (ERLG…PCGN) and 359 to 527 (MDKQ…VHEN). The stretch at 91–147 (KVAEEDKEESEEELIFTESNSEVSEEVCTEDEEESQEEEEDSEEEEDSEEEEETTEA) forms a coiled coil. Composition is skewed to acidic residues over residues 95–105 (EDKEESEEELI) and 113–145 (VSEE…EETT). 2 stretches are compositionally biased toward polar residues: residues 151-164 (INGT…NTDN) and 170-193 (FKSQ…NSES). Residues 359-377 (MDKQRQKRMQEQKQQEGHD) show a composition bias toward basic and acidic residues. Positions 391–402 (TPGSSPYASPRQ) are enriched in polar residues. At Ser407 the chain carries Phosphoserine. The span at 421 to 452 (PPSPVAPPPPPPPPPLPPHMLPPPPPPPAPPL) shows a compositional bias: pro residues. The segment covering 468-479 (QQESAQRALQNG) has biased composition (polar residues). Basic residues predominate over residues 480–490 (QRKKKGKKVKK). Residues 497–515 (KEIKNSLRSVQEKKMEDSS) are compositionally biased toward basic and acidic residues. The region spanning 524-543 (VHENLMEAIRGSSIRQLRRV) is the WH2 domain.

It belongs to the tropomodulin family. As to quaternary structure, can bind at least three actin monomers and thereby provides a nucleus for actin filament formation. Interacts (via N-terminus) with tropomyosin alpha (TPM1) (via N-terminus). May also interact with TPM2 (via N-terminus). Interacts with FLII. In terms of tissue distribution, detected in neonate heart (at protein level). Detected in embryonic heart and in pharyngeal arches. Detected in adult heart.

It is found in the cytoplasm. Its subcellular location is the myofibril. The protein localises to the sarcomere. The protein resides in the m line. It localises to the cytoskeleton. Functionally, mediates nucleation of actin filaments and thereby promotes actin polymerization. Plays a role in the regulation of actin filament length. Required for normal sarcomere organization in the heart, and for normal heart function. The sequence is that of Leiomodin-2 (Lmod2) from Mus musculus (Mouse).